The chain runs to 217 residues: Probable nicotinate-nucleotide adenylyltransferase (217 aa).

Belongs to the NadD family.

It catalyses the reaction nicotinate beta-D-ribonucleotide + ATP + H(+) = deamido-NAD(+) + diphosphate. It participates in cofactor biosynthesis; NAD(+) biosynthesis; deamido-NAD(+) from nicotinate D-ribonucleotide: step 1/1. Functionally, catalyzes the reversible adenylation of nicotinate mononucleotide (NaMN) to nicotinic acid adenine dinucleotide (NaAD). The polypeptide is Probable nicotinate-nucleotide adenylyltransferase (Baumannia cicadellinicola subsp. Homalodisca coagulata).